Here is a 179-residue protein sequence, read N- to C-terminus: ATP synthase subunit delta (179 aa).

Belongs to the ATPase delta chain family. As to quaternary structure, F-type ATPases have 2 components, F(1) - the catalytic core - and F(0) - the membrane proton channel. F(1) has five subunits: alpha(3), beta(3), gamma(1), delta(1), epsilon(1). F(0) has three main subunits: a(1), b(2) and c(10-14). The alpha and beta chains form an alternating ring which encloses part of the gamma chain. F(1) is attached to F(0) by a central stalk formed by the gamma and epsilon chains, while a peripheral stalk is formed by the delta and b chains.

The protein resides in the cell membrane. Its function is as follows. F(1)F(0) ATP synthase produces ATP from ADP in the presence of a proton or sodium gradient. F-type ATPases consist of two structural domains, F(1) containing the extramembraneous catalytic core and F(0) containing the membrane proton channel, linked together by a central stalk and a peripheral stalk. During catalysis, ATP synthesis in the catalytic domain of F(1) is coupled via a rotary mechanism of the central stalk subunits to proton translocation. Functionally, this protein is part of the stalk that links CF(0) to CF(1). It either transmits conformational changes from CF(0) to CF(1) or is implicated in proton conduction. The sequence is that of ATP synthase subunit delta from Clostridium botulinum (strain Langeland / NCTC 10281 / Type F).